A 471-amino-acid polypeptide reads, in one-letter code: Ribulose bisphosphate carboxylase large chain (471 aa).

The substrate site is built by asparagine 119 and threonine 169. Lysine 171 (proton acceptor) is an active-site residue. Lysine 173 serves as a coordination point for substrate. Lysine 197, aspartate 199, and glutamate 200 together coordinate Mg(2+). Residue lysine 197 is modified to N6-carboxylysine. Histidine 290 (proton acceptor) is an active-site residue. The substrate site is built by arginine 291, histidine 323, and serine 375.

Belongs to the RuBisCO large chain family. Type I subfamily. As to quaternary structure, heterohexadecamer of 8 large chains and 8 small chains; disulfide-linked. The disulfide link is formed within the large subunit homodimers. The cofactor is Mg(2+). The disulfide bond which can form in the large chain dimeric partners within the hexadecamer appears to be associated with oxidative stress and protein turnover.

Its subcellular location is the carboxysome. It catalyses the reaction 2 (2R)-3-phosphoglycerate + 2 H(+) = D-ribulose 1,5-bisphosphate + CO2 + H2O. The catalysed reaction is D-ribulose 1,5-bisphosphate + O2 = 2-phosphoglycolate + (2R)-3-phosphoglycerate + 2 H(+). Its function is as follows. RuBisCO catalyzes two reactions: the carboxylation of D-ribulose 1,5-bisphosphate, the primary event in carbon dioxide fixation, as well as the oxidative fragmentation of the pentose substrate in the photorespiration process. Both reactions occur simultaneously and in competition at the same active site. The chain is Ribulose bisphosphate carboxylase large chain from Microcystis aeruginosa (strain NIES-843 / IAM M-2473).